Reading from the N-terminus, the 1401-residue chain is DNA-directed RNA polymerase subunit beta'' (1401 aa).

C224, C295, C302, and C305 together coordinate Zn(2+).

Belongs to the RNA polymerase beta' chain family. RpoC2 subfamily. As to quaternary structure, in plastids the minimal PEP RNA polymerase catalytic core is composed of four subunits: alpha, beta, beta', and beta''. When a (nuclear-encoded) sigma factor is associated with the core the holoenzyme is formed, which can initiate transcription. Zn(2+) is required as a cofactor.

The protein localises to the plastid. Its subcellular location is the chloroplast. It catalyses the reaction RNA(n) + a ribonucleoside 5'-triphosphate = RNA(n+1) + diphosphate. Functionally, DNA-dependent RNA polymerase catalyzes the transcription of DNA into RNA using the four ribonucleoside triphosphates as substrates. This Ipomoea purpurea (Common morning glory) protein is DNA-directed RNA polymerase subunit beta''.